The primary structure comprises 478 residues: H(+)/Cl(-) exchange transporter ClcA (478 aa).

Residues 1–32 (MTHSTQQLSPEGVAEGKRGRLIRELVNRDKTP) lie on the Cytoplasmic side of the membrane. A helical transmembrane segment spans residues 33–69 (LIILIMAAVVGVVTGLLGVAFDRGVDWVQQQRLLALA). Topologically, residues 70 to 76 (NVADSAL) are periplasmic. A helical transmembrane segment spans residues 77-100 (LVWPLAFIMSALLAMMGYFLVSRF). The Selectivity filter part_1 signature appears at 106-110 (GSGIP). Residue serine 107 participates in chloride binding. An intramembrane region (helical) is located at residues 109–116 (IPEIEGAM). At 117-123 (EEMRPVR) the chain is on the cytoplasmic side. 2 consecutive transmembrane segments (helical) span residues 124 to 141 (WWRVIPVKFIGGLGTLGA) and 148 to 166 (EGPMVQMGGNSGRMIVDIF). A Selectivity filter part_2 motif is present at residues 146–150 (GREGP). At 167 to 176 (RLRSPEARHS) the chain is on the cytoplasmic side. 2 intramembrane regions (helical) span residues 177 to 189 (LLATGAAAGLSAA) and 193 to 201 (PLAGILFVI). The Cytoplasmic segment spans residues 202 to 214 (EEMRSQFRYSLVS). Residues 215–232 (IKAVFIGVITSTIVYRYF) form a helical membrane-spanning segment. The Periplasmic portion of the chain corresponds to 233 to 252 (NGERAIIEVGKLSDAPLNTL). The chain crosses the membrane as a helical span at residues 253–281 (WLYLLLGIIFGAVGVIFNALIFRTQDMFV). The Cytoplasmic portion of the chain corresponds to 282–287 (RFHGGD). Residues 288-309 (WRKLVLIGGLLGGMCGLLALLH) traverse the membrane as a helical segment. The Periplasmic segment spans residues 310–329 (GNAVGGGFALIPIAAAGNFS). 2 consecutive transmembrane segments (helical) span residues 330 to 349 (IGMLLFIFIARVITTLLCFG) and 355 to 376 (GIFAPMLALGTILGTAFGLSCA). Residues 355–359 (GIFAP) carry the Selectivity filter part_3 motif. Chloride is bound by residues isoleucine 356 and phenylalanine 357. Residues 377-386 (HFFPQYGIEA) lie on the Periplasmic side of the membrane. The segment at residues 387-401 (GTFAIAGMGALFAAS) is an intramembrane region (helical). An intramembrane region (note=Loop between two helices) is located at residues 402–404 (VRA). The helical intramembrane region spans 405–416 (PLTGIVLVLEMT). Residues 417 to 421 (DNYQL) constitute an intramembrane region (note=Loop between two helices). Residues 422–438 (ILPMIVTCLGATLIAQF) form a helical membrane-spanning segment. The Cytoplasmic segment spans residues 439-478 (MGGKPLYSAILARTLAKQEQARATVIAQEPAVENTPQTGR). Tyrosine 445 contacts chloride.

Belongs to the chloride channel (TC 2.A.49) family. ClcA subfamily. Homodimer.

Its subcellular location is the cell inner membrane. It carries out the reaction 2 chloride(in) + H(+)(out) = 2 chloride(out) + H(+)(in). In terms of biological role, proton-coupled chloride transporter. Functions as antiport system and exchanges two chloride ions for 1 proton. Probably acts as an electrical shunt for an outwardly-directed proton pump that is linked to amino acid decarboxylation, as part of the extreme acid resistance (XAR) response. In Yersinia pseudotuberculosis serotype IB (strain PB1/+), this protein is H(+)/Cl(-) exchange transporter ClcA.